A 323-amino-acid polypeptide reads, in one-letter code: GTP 3',8-cyclase (323 aa).

In terms of domain architecture, Radical SAM core spans 4 to 226; the sequence is TFQRQINYLR…LEPFPDLATN (223 aa). Position 13 (Arg13) interacts with GTP. [4Fe-4S] cluster is bound by residues Cys20 and Cys24. An S-adenosyl-L-methionine-binding site is contributed by Tyr26. Cys27 lines the [4Fe-4S] cluster pocket. Arg63 contributes to the GTP binding site. Position 67 (Gly67) interacts with S-adenosyl-L-methionine. Thr94 serves as a coordination point for GTP. Ser118 is an S-adenosyl-L-methionine binding site. Position 155 (Lys155) interacts with GTP. Position 189 (Met189) interacts with S-adenosyl-L-methionine. The [4Fe-4S] cluster site is built by Cys252 and Cys255. A GTP-binding site is contributed by 257-259; that stretch reads RLR. Residue Cys269 participates in [4Fe-4S] cluster binding.

The protein belongs to the radical SAM superfamily. MoaA family. As to quaternary structure, monomer and homodimer. [4Fe-4S] cluster is required as a cofactor.

The catalysed reaction is GTP + AH2 + S-adenosyl-L-methionine = (8S)-3',8-cyclo-7,8-dihydroguanosine 5'-triphosphate + 5'-deoxyadenosine + L-methionine + A + H(+). It functions in the pathway cofactor biosynthesis; molybdopterin biosynthesis. In terms of biological role, catalyzes the cyclization of GTP to (8S)-3',8-cyclo-7,8-dihydroguanosine 5'-triphosphate. This is GTP 3',8-cyclase from Moorella thermoacetica (strain ATCC 39073 / JCM 9320).